The chain runs to 262 residues: MSGDLSPIDKAKFVAAKRAAELVEDGMRVGLGTGSTAAWLVRCLGEMVREDGLKITGVPTSARTAELAREVGIELITLDEARWLDLTIDGADEFDSELNLIKGGGGALLQEKIVATASDQMVVIADKAKEVETLGAFPLPIEVIPFGWQTSQALVEETLISMDVMGRSSTLRMNGASPYVTDEGNHILDLHLNRIGNPRQLALVLNQIPGVVENGLFIDICDTVVIGYGDGKVEVRDINEGTIETDRIDFVETDNLFADLND.

Residues 33–36 (TGST), 89–92 (DGAD), and 102–105 (KGGG) contribute to the substrate site. Residue glutamate 111 is the Proton acceptor of the active site. Residue lysine 129 coordinates substrate.

This sequence belongs to the ribose 5-phosphate isomerase family. Homodimer.

It carries out the reaction aldehydo-D-ribose 5-phosphate = D-ribulose 5-phosphate. It functions in the pathway carbohydrate degradation; pentose phosphate pathway; D-ribose 5-phosphate from D-ribulose 5-phosphate (non-oxidative stage): step 1/1. Its function is as follows. Catalyzes the reversible conversion of ribose-5-phosphate to ribulose 5-phosphate. The polypeptide is Ribose-5-phosphate isomerase A (Ruegeria sp. (strain TM1040) (Silicibacter sp.)).